Consider the following 1818-residue polypeptide: MSSTKSQVALATNIPTNLSSAASASTAAAAAAVVVVASANAAVASSANSSGVGSGSGPGPGSGAGVSGPVAAGTATAVATGSTVTAATSVAATTSTSVATISTSCSSSSINNINNNCGEECQSAAGSSNLGRQNSFGNRRGNMKGKHLTRSHAMRESTSPPRTPTPRAASEQQQQQLQGEQHEHNNNNNINSSSKAQSAGRGNSPLMETPAVIVTSQQPQQQQQQQQQQQQSVPPKPQQNVPLSNEAEFPKLSPPKKSGGQHNRTNSNGSGMEFNNNNNSSNKKFVVDMKANGLDNKPHNNSSTGVIFNSGMNYKAAERHDRHERHEMSSQNSNLSNNHDEEPYHYEPRGGGGGKKHRANTNAKGNKPRLKNLGGSSSGSIDLGGGGGNGNCNNMSNNGQSNNSSNNTSGFISRENSSEQYTDYGGTDLLVFFRDTLNKNPKDRNILLKIEKDLIDFVQENSRGCEYRFPPASSYNRMLIHRTAAFFGMEHNVDTETQQCVIVAVAKNTRIPEIRFQSLVRDDARKSILKRDTHSFDEVRQSPYLCPLSLDRKAKSFEEREEDYDRARSRIFSRTGGNHDGYSGGGGDEECYGGWEQQQQQQKQSQPPRPKRPNGKMLQMQNSTESRDGMRSGGAVPKSHNFGNYGGPPSSGGPGNNSLPRGDSTNSIKSGRGGFVKQDSTGSTPWRLSPSSSGSIYHYDPSNLPPNQALQHSGNQYQSQNQGNSSSGGYNNYRKSSPHQQQQSQQQQQSQQHHQQQLQQPQQLHQQSSQQYATTELSCSSTESYAEEEAQSPGMECSEGYESYEQQSLPVQQQLSGNGDSASTKGDDCDSLASATACLSITTSTSTKNYDRIEVQKYKNQATSPNIPACCAVGEKLELEAGLPQEQEQEPMAGPSSSGSATSSVGITELPSSQTPLPMVNQVNCDLQSVSPSTTPYSQCEVKTPSQNHAPSAAVEEPKTTTWTYTQSYQAPDGSTVFHTTTTPNGAAPYCATTYQQGPDGSIYAVPQGMVYAAYPQPGVGTAGGASQPLFQLTTSSHPPAQTIFASPEAGAEIPGGTYMIPVFDPAQQPREGLIPAQAIYQTGPGGPGATTVMPMATAAAYPTAQFATAAPNGAPIYQAPLIYSSEPGGGAQLQQLPMAPYPIQYSYPYYHPISYYVPQQAVAAAPMVASQPQVGQAPMQQQAPHTGAGTTTGPPTVVSVSGQQHHQPHQQHHQQQQHSSNGSVVTSSAYGTRVKRTPGGGSIHYNPSYTPSSVAHAGGAHHPSAGSAQIIAAPAASTTTYHALPTLTLAHGGPATGTDLSGAGGAHVYALPAQHALIPTNIFPYAAAAAAAAGGPGGPPTTPQVVQQAPPPPPQSAPHHALITAAPFYPANGGNMDQGASQSAPSTPAAPGRQAPLFSTPPAPNNGSSGSSSAGGGGNSGGYHSNSSTPHYYQGQNSNEGYTSPYEKRNHGGGASGAHSVGVRKPYHPGGYNPRHSVPLGGIPSGAKTPLLNSNNEPTPRASPSSVSLGGASSSGGANSYPHRGPPPHTMGVKRDNKPNQLPLISGPPPSYAANSSPGVSSYESKPPVRLNAGAASFRSQKSMNQDYRRSVSQRNSPSANGGGSGSHESSNNSPNSIVGSQSNSAANTPNAAAPPPPQPQPTLVSHSGGFVVLDQTTGAAMNASPPSLYGGGGGPNAGISGGAGASGAAGSNGGHQPGGGGGARSHIPTAQLHHSAAAAAAAAAGSQQATAAVLSGVAAAAALGGYNPNGASGVYFKYGQTYFAHPSVALPNSRRSPSNDIRPQMAQVAGMYPTMMIQARHPSRHPNPNYKGSRPR.

Disordered regions lie at residues 47-68 (ANSS…GVSG), 123-282 (SAAG…NSSN), and 317-413 (AERH…GFIS). Gly residues predominate over residues 52-66 (VGSGSGPGPGSGAGV). Positions 124 to 137 (AAGSSNLGRQNSFG) are enriched in polar residues. The segment covering 141–152 (GNMKGKHLTRSH) has biased composition (basic residues). 4 stretches are compositionally biased toward low complexity: residues 156-179 (ESTS…QLQG), 186-199 (NNNN…AQSA), 217-233 (QQPQ…QQSV), and 266-282 (NSNG…NSSN). Phosphoserine is present on residues Ser-267 and Ser-270. The segment covering 317–328 (AERHDRHERHEM) has biased composition (basic and acidic residues). The residue at position 336 (Ser-336) is a Phosphoserine. Residues 338–348 (NHDEEPYHYEP) are compositionally biased toward basic and acidic residues. Low complexity-rich tracts occupy residues 372-381 (NLGGSSSGSI) and 391-410 (NCNN…NTSG). An R3H domain is found at 444–508 (RNILLKIEKD…QCVIVAVAKN (65 aa)). The SUZ domain occupies 510-576 (RIPEIRFQSL…ARSRIFSRTG (67 aa)). Residue Ser-535 is modified to Phosphoserine. Residues 557 to 568 (FEEREEDYDRAR) are compositionally biased toward basic and acidic residues. 6 disordered regions span residues 557 to 806 (FEER…SYEQ), 885 to 916 (QEQE…SQTP), 936 to 959 (PYSQ…EEPK), 1176 to 1249 (GQAP…YNPS), 1332 to 1648 (AAAG…LVSH), and 1684 to 1709 (GAGA…RSHI). Residues 592-606 (YGGWEQQQQQQKQSQ) are compositionally biased toward low complexity. Residues 644 to 655 (NYGGPPSSGGPG) are compositionally biased toward gly residues. Residues 678-695 (QDSTGSTPWRLSPSSSGS) are compositionally biased toward polar residues. The segment covering 713-771 (SGNQYQSQNQGNSSSGGYNNYRKSSPHQQQQSQQQQQSQQHHQQQLQQPQQLHQQSSQQ) has biased composition (low complexity). The span at 772-784 (YATTELSCSSTES) shows a compositional bias: polar residues. Residues 893–904 (AGPSSSGSATSS) show a composition bias toward low complexity. Positions 1176–1197 (GQAPMQQQAPHTGAGTTTGPPT) are enriched in low complexity. Residues 1220–1231 (SSNGSVVTSSAY) are compositionally biased toward polar residues. Low complexity predominate over residues 1381–1392 (ASQSAPSTPAAP). Residues 1430-1443 (TPHYYQGQNSNEGY) are compositionally biased toward polar residues. The segment covering 1503–1521 (ASPSSVSLGGASSSGGANS) has biased composition (low complexity). Polar residues-rich tracts occupy residues 1554-1565 (AANSSPGVSSYE) and 1579-1596 (FRSQ…VSQR). Low complexity predominate over residues 1608-1633 (SHESSNNSPNSIVGSQSNSAANTPNA). The span at 1684–1705 (GAGASGAAGSNGGHQPGGGGGA) shows a compositional bias: gly residues.

Interacts with hfp; however, given the nuclear localization of hfp, the relevance of such interaction is unclear. Interacts with CycE, Cul1, and the SCF-proteasome complex. Expressed in all germline cells of the germarium including the stem cells and dividing cystocytes.

The protein localises to the cytoplasm. In terms of biological role, required for the regulation of germline mitosis, karyosome formation, and establishment of dorsoventral (DS) polarity of the egg and embryo. Involved in proper grk mRNA localization and translation in the oocyte. May control germline mitosis by facilitating the cyclin E (CycE) proteolysis by the SCF-ubiquitin-proteasome complex. The chain is Protein encore (enc) from Drosophila melanogaster (Fruit fly).